A 208-amino-acid polypeptide reads, in one-letter code: CD209 antigen-like protein E (208 aa).

Residues 1–16 (MRAPQMGSLGFLDKGH) lie on the Cytoplasmic side of the membrane. A helical; Signal-anchor for type II membrane protein membrane pass occupies residues 17–37 (IPLVLQLLFLILFTGLLVAII). Residues 38-208 (IQVSKMPSSE…KIATTCLSKW (171 aa)) lie on the Extracellular side of the membrane. Intrachain disulfides connect C77–C88, C105–C197, and C176–C189. The C-type lectin domain occupies 83–198 (FFNGNCYFFS…CEQRKFWICK (116 aa)).

It localises to the membrane. Putative pathogen-recognition receptor. May mediate the endocytosis of pathogens which are subsequently degraded in lysosomal compartments. The protein is CD209 antigen-like protein E (Cd209e) of Mus musculus (Mouse).